The sequence spans 316 residues: Porphobilinogen deaminase (316 aa).

Residue Cys-240 is modified to S-(dipyrrolylmethanemethyl)cysteine.

It belongs to the HMBS family. As to quaternary structure, monomer. Dipyrromethane serves as cofactor.

The catalysed reaction is 4 porphobilinogen + H2O = hydroxymethylbilane + 4 NH4(+). It participates in porphyrin-containing compound metabolism; protoporphyrin-IX biosynthesis; coproporphyrinogen-III from 5-aminolevulinate: step 2/4. Tetrapolymerization of the monopyrrole PBG into the hydroxymethylbilane pre-uroporphyrinogen in several discrete steps. In Alkaliphilus metalliredigens (strain QYMF), this protein is Porphobilinogen deaminase.